Reading from the N-terminus, the 240-residue chain is Dihydromonapterin reductase (240 aa).

The active-site Proton acceptor is the tyrosine 152.

This sequence belongs to the short-chain dehydrogenases/reductases (SDR) family. FolM subfamily.

It carries out the reaction (6S)-5,6,7,8-tetrahydrofolate + NADP(+) = 7,8-dihydrofolate + NADPH + H(+). The catalysed reaction is 7,8-dihydromonapterin + NADPH + H(+) = 5,6,7,8-tetrahydromonapterin + NADP(+). Its function is as follows. Catalyzes the reduction of dihydromonapterin to tetrahydromonapterin. Also has lower activity with dihydrofolate. The polypeptide is Dihydromonapterin reductase (folM) (Escherichia coli O6:K15:H31 (strain 536 / UPEC)).